A 951-amino-acid polypeptide reads, in one-letter code: Exportin-2 (951 aa).

The Importin N-terminal domain occupies Ala29–Ser104.

It belongs to the XPO2/CSE1 family.

It is found in the cytoplasm. The protein localises to the nucleus. Functionally, export receptor for importin alpha. Mediates importin-alpha re-export from the nucleus to the cytoplasm after import substrates have been released into the nucleoplasm. The polypeptide is Exportin-2 (xpo2) (Dictyostelium discoideum (Social amoeba)).